The following is a 487-amino-acid chain: N-succinylglutamate 5-semialdehyde dehydrogenase (487 aa).

Residue 221-226 (GSSRTG) participates in NAD(+) binding. Active-site residues include glutamate 244 and cysteine 278.

Belongs to the aldehyde dehydrogenase family. AstD subfamily.

It carries out the reaction N-succinyl-L-glutamate 5-semialdehyde + NAD(+) + H2O = N-succinyl-L-glutamate + NADH + 2 H(+). It participates in amino-acid degradation; L-arginine degradation via AST pathway; L-glutamate and succinate from L-arginine: step 4/5. Functionally, catalyzes the NAD-dependent reduction of succinylglutamate semialdehyde into succinylglutamate. This chain is N-succinylglutamate 5-semialdehyde dehydrogenase, found in Pseudomonas putida (strain GB-1).